A 181-amino-acid polypeptide reads, in one-letter code: Adenine phosphoribosyltransferase (181 aa).

Belongs to the purine/pyrimidine phosphoribosyltransferase family. As to quaternary structure, homodimer.

The protein resides in the cytoplasm. It carries out the reaction AMP + diphosphate = 5-phospho-alpha-D-ribose 1-diphosphate + adenine. It participates in purine metabolism; AMP biosynthesis via salvage pathway; AMP from adenine: step 1/1. In terms of biological role, catalyzes a salvage reaction resulting in the formation of AMP, that is energically less costly than de novo synthesis. The polypeptide is Adenine phosphoribosyltransferase (Vibrio cholerae serotype O1 (strain ATCC 39541 / Classical Ogawa 395 / O395)).